Here is a 152-residue protein sequence, read N- to C-terminus: UPF0178 protein SAR0734 (152 aa).

Belongs to the UPF0178 family.

The chain is UPF0178 protein SAR0734 from Staphylococcus aureus (strain MRSA252).